A 452-amino-acid polypeptide reads, in one-letter code: Keratin, type I cytoskeletal 42 (452 aa).

The interval 4 to 93 (TTSVRQFSTS…GVSDALLGGS (90 aa)) is head. A coil 1A region spans residues 94–129 (EKETMQNLNDRLATYLDRVRALEEANADLEVKIREW). The IF rod domain maps to 94 to 405 (EKETMQNLND…RLLEGEDAHL (312 aa)). Positions 130 to 147 (YKKQGPGPARDYSPYFKT) are linker 1. A coil 1B region spans residues 148-239 (IEDLRNKILA…KNHEEEMNAL (92 aa)). The tract at residues 240-262 (RGQVGGDVNVEMDAAPGVDLSRI) is linker 12. Positions 263–401 (LNEMRDQYEK…ATYRRLLEGE (139 aa)) are coil 2. A tail region spans residues 402–452 (DAHLATQYSSSLASQPSREGMVTSRQVRTIVEEVQDGKVVSSREQVHRSTH).

It belongs to the intermediate filament family. As to quaternary structure, heterodimer of a type I and a type II keratin. Colocalizes with KRT8/KRT18 filament network. Expressed in nail matrix and nail bed epithelium (at protein level). Also expressed in tongue and digits with weak expression in vibrissae and in both filiform and fungiform papillae of oral mucosa.

It localises to the cytoplasm. The polypeptide is Keratin, type I cytoskeletal 42 (Mus musculus (Mouse)).